The primary structure comprises 726 residues: Endo-1,4-beta-xylanase/feruloyl esterase (726 aa).

A signal peptide spans 1–19 (MKKLLVALSLIAGSLTASA). Residues 27 to 369 (YAAGPGLKDA…KRSLQIIRDF (343 aa)) form the GH10 domain. The Proton donor; for xylanase activity role is filled by glutamate 161. Glutamate 280 serves as the catalytic Nucleophile; for xylanase activity. Residues 370–726 (DAAMDNRKPK…LEKMAQSLFK (357 aa)) are feruloyl esterase. Serine 629 functions as the Nucleophile; for esterase activity in the catalytic mechanism.

In the N-terminal section; belongs to the glycosyl hydrolase 10 (cellulase F) family. Monomer or homodimer.

It carries out the reaction Endohydrolysis of (1-&gt;4)-beta-D-xylosidic linkages in xylans.. The catalysed reaction is feruloyl-polysaccharide + H2O = ferulate + polysaccharide.. Its pathway is glycan degradation; xylan degradation. Functionally, involved in degradation of plant cell wall polysaccharides. Has endo-xylanase activity towards substrates such as oat spelt xylan (OSX), acetylated xylo-oligosaccharides and acetylated xylan, producing primarily xylobiose; cannot hydrolyze xylobiose to xylose. Also has feruloyl esterase activity, releasing ferulic acid from methylferulate, and from the more natural substrates wheat bran, corn fiber, and XOS(FA,Ac), a corn fiber-derived substrate enriched in O-acetyl and ferulic acid esters. Exhibits negligible acetyl esterase activity on sugar acetates. Acts synergistically with Xyl3A to increase the release of xylose from xylan. Does not possess endoglucanase or mannanase activities since it is not able to hydrolyze carboxymethyl cellulose and locust bean gum. The polypeptide is Endo-1,4-beta-xylanase/feruloyl esterase (Xylanibacter ruminicola (strain ATCC 19189 / DSM 19721 / CIP 105475 / JCM 8958 / 23) (Prevotella ruminicola)).